Here is a 308-residue protein sequence, read N- to C-terminus: Uricase (308 aa).

Active-site charge relay system residues include K5 and T65. Positions 65, 66, 177, 194, 242, 243, and 269 each coordinate urate. The tract at residues 283–308 (ASVLREPPAPTGFQQFSMDRGDLDEQ) is disordered.

It belongs to the uricase family.

It catalyses the reaction urate + O2 + H2O = 5-hydroxyisourate + H2O2. Its pathway is purine metabolism; urate degradation; (S)-allantoin from urate: step 1/3. Its function is as follows. Catalyzes the oxidation of uric acid to 5-hydroxyisourate, which is further processed to form (S)-allantoin. The chain is Uricase from Haloferax volcanii (strain ATCC 29605 / DSM 3757 / JCM 8879 / NBRC 14742 / NCIMB 2012 / VKM B-1768 / DS2) (Halobacterium volcanii).